The chain runs to 504 residues: Amyloid-beta A4 precursor protein-binding family B member 3 (504 aa).

The region spanning 29-61 (TGLPPGWRKIRDAAGTYYWHVPSGSTQWQRPTW) is the WW domain. PID domains lie at 111–278 (EPGA…QVEL) and 283–438 (SQAA…RTSS).

Interacts with APP (via intracellular domain). Interacts with APLP1 and APLP2 (via intracellular domain). In terms of tissue distribution, expressed predominantly in brain and testis.

The protein resides in the cytoplasm. It is found in the nucleus. Its function is as follows. May modulate the internalization of amyloid-beta precursor protein. The chain is Amyloid-beta A4 precursor protein-binding family B member 3 from Rattus norvegicus (Rat).